The sequence spans 428 residues: Tyrosine--tRNA ligase (428 aa).

Tyr34 provides a ligand contact to L-tyrosine. A 'HIGH' region motif is present at residues 39–48 (PTADSLHIGH). 2 residues coordinate L-tyrosine: Tyr171 and Gln175. The short motif at 236–240 (KFGKT) is the 'KMSKS' region element. Lys239 contacts ATP. In terms of domain architecture, S4 RNA-binding spans 358–424 (VGLIDLLVDA…GKKKYFLIQV (67 aa)).

This sequence belongs to the class-I aminoacyl-tRNA synthetase family. TyrS type 1 subfamily. Homodimer.

The protein resides in the cytoplasm. It catalyses the reaction tRNA(Tyr) + L-tyrosine + ATP = L-tyrosyl-tRNA(Tyr) + AMP + diphosphate + H(+). Catalyzes the attachment of tyrosine to tRNA(Tyr) in a two-step reaction: tyrosine is first activated by ATP to form Tyr-AMP and then transferred to the acceptor end of tRNA(Tyr). This chain is Tyrosine--tRNA ligase, found in Oceanobacillus iheyensis (strain DSM 14371 / CIP 107618 / JCM 11309 / KCTC 3954 / HTE831).